The sequence spans 551 residues: Dihydroxy-acid dehydratase (551 aa).

Position 52 (C52) interacts with [2Fe-2S] cluster. Position 84 (D84) interacts with Mg(2+). C125 contributes to the [2Fe-2S] cluster binding site. Residues D126 and K127 each contribute to the Mg(2+) site. At K127 the chain carries N6-carboxylysine. Position 197 (C197) interacts with [2Fe-2S] cluster. Residue E448 coordinates Mg(2+). The Proton acceptor role is filled by S474.

Belongs to the IlvD/Edd family. Homodimer. Requires [2Fe-2S] cluster as cofactor. Mg(2+) is required as a cofactor.

It carries out the reaction (2R)-2,3-dihydroxy-3-methylbutanoate = 3-methyl-2-oxobutanoate + H2O. It catalyses the reaction (2R,3R)-2,3-dihydroxy-3-methylpentanoate = (S)-3-methyl-2-oxopentanoate + H2O. It participates in amino-acid biosynthesis; L-isoleucine biosynthesis; L-isoleucine from 2-oxobutanoate: step 3/4. Its pathway is amino-acid biosynthesis; L-valine biosynthesis; L-valine from pyruvate: step 3/4. In terms of biological role, functions in the biosynthesis of branched-chain amino acids. Catalyzes the dehydration of (2R,3R)-2,3-dihydroxy-3-methylpentanoate (2,3-dihydroxy-3-methylvalerate) into 2-oxo-3-methylpentanoate (2-oxo-3-methylvalerate) and of (2R)-2,3-dihydroxy-3-methylbutanoate (2,3-dihydroxyisovalerate) into 2-oxo-3-methylbutanoate (2-oxoisovalerate), the penultimate precursor to L-isoleucine and L-valine, respectively. The sequence is that of Dihydroxy-acid dehydratase from Francisella tularensis subsp. tularensis (strain FSC 198).